The sequence spans 615 residues: Nuclear cap-binding protein subunit 3 (615 aa).

A Glycyl lysine isopeptide (Lys-Gly) (interchain with G-Cter in SUMO2) cross-link involves residue Lys12. Over residues Ala15 to Glu27 the composition is skewed to low complexity. Positions Ala15–Glu43 are disordered. Ser25 is modified (phosphoserine). Residue Lys70 forms a Glycyl lysine isopeptide (Lys-Gly) (interchain with G-Cter in SUMO2) linkage. Phosphoserine is present on Ser73. Residues Glu126–Met187 form an RNA recognition motif (RRM) domain region. A WLDD motif; essential for 7-methylguanosine-containing mRNA cap binding motif is present at residues Trp155–Asp158. Disordered regions lie at residues Pro182–Leu233 and His332–Asp400. The span at Asp185–Asp208 shows a compositional bias: basic and acidic residues. Residue Lys186 forms a Glycyl lysine isopeptide (Lys-Gly) (interchain with G-Cter in SUMO2) linkage. 2 positions are modified to phosphoserine: Ser209 and Ser210. Composition is skewed to acidic residues over residues Ser209–Leu230 and Glu341–Ala360. Residues Asp361–Leu383 are compositionally biased toward basic and acidic residues. Thr408 bears the Phosphothreonine mark. Residue Ser410 is modified to Phosphoserine. Disordered regions lie at residues Ser430 to Pro454 and Glu467 to Ser615. Residues Val506–Ser516 are compositionally biased toward basic and acidic residues. Lys536 is covalently cross-linked (Glycyl lysine isopeptide (Lys-Gly) (interchain with G-Cter in SUMO2)). 2 stretches are compositionally biased toward basic and acidic residues: residues Lys549–Gly564 and Ile580–Leu593. Ser563 carries the post-translational modification Phosphoserine. The segment covering Glu606 to Ser615 has biased composition (low complexity). At Ser615 the chain carries Phosphoserine.

It belongs to the NCBP3 family. In terms of assembly, component of an alternative cap-binding complex (CBC) composed of NCBP1/CBP80 and NCBP3. Interacts with SRRT, KPNA3, THOC5 and EIF4A3.

It is found in the nucleus. The protein localises to the cytoplasm. In terms of biological role, associates with NCBP1/CBP80 to form an alternative cap-binding complex (CBC) which plays a key role in mRNA export. NCBP3 serves as adapter protein linking the capped RNAs (m7GpppG-capped RNA) to NCBP1/CBP80. Unlike the conventional CBC with NCBP2 which binds both small nuclear RNA (snRNA) and messenger (mRNA) and is involved in their export from the nucleus, the alternative CBC with NCBP3 does not bind snRNA and associates only with mRNA thereby playing a role in only mRNA export. The alternative CBC is particularly important in cellular stress situations such as virus infections and the NCBP3 activity is critical to inhibit virus growth. The polypeptide is Nuclear cap-binding protein subunit 3 (Mus musculus (Mouse)).